A 1150-amino-acid chain; its full sequence is RNA polymerase-associated protein CTR9 (1150 aa).

TPR repeat units follow at residues Val-143 to Asn-176, Val-177 to Thr-210, Ala-212 to Asn-245, Ser-247 to His-282, Ala-320 to Glu-353, Thr-355 to Asn-388, Tyr-432 to Asn-464, Pro-471 to Gln-504, Pro-594 to Asn-627, Phe-643 to Asn-677, Tyr-679 to Phe-711, Tyr-712 to Glu-745, and Ser-748 to Asn-781. Coiled-coil stretches lie at residues Ala-848–Leu-916 and Glu-972–Ser-1028. A disordered region spans residues Lys-935–Asp-1150. A compositionally biased stretch (basic residues) spans Glu-975 to Glu-992. Composition is skewed to basic and acidic residues over residues Arg-993–Asp-1005, Glu-1013–Ser-1024, Asp-1060–Thr-1084, and Arg-1132–Asp-1150.

Component of the PAF1 complex which consists of at least cdc-73, ctr-9, leo-1, pafo-1 and rtfo-1.

It is found in the nucleus. In terms of biological role, component of the PAF1 complex which is a multifunctional complex involved in transcription initiation via genetic interactions with TATA-binding proteins, elongation and transcription-coupled histone modification. Ctr-9 is required for epidermal microtubule organization during morphogenesis. The chain is RNA polymerase-associated protein CTR9 from Caenorhabditis elegans.